Consider the following 359-residue polypeptide: Non-classical arabinogalactan protein 31 (359 aa).

Residues 1 to 24 form the signal peptide; that stretch reads MGFIGKSVLVSLVALWCFTSSVFT. The interval 31–215 is disordered; that stretch reads TQTPSLAPAP…PPVSPPTKPP (185 aa). Over residues 44-66 the composition is skewed to basic residues; it reads HHGHHHPHPPHHHHPHPHPHPHP. Pro residues predominate over residues 67–215; sequence PAKSPVKPPV…PPVSPPTKPP (149 aa). Pro71, Pro75, Pro79, Pro82, Pro83, Pro87, Pro91, Pro95, Pro99, Pro103, Pro107, Pro111, Pro114, Pro115, Pro119, Pro123, Pro127, Pro131, Pro135, Pro139, Pro143, Pro147, Pro151, Pro155, Pro159, Pro163, Pro167, Pro171, Pro175, Pro179, Pro183, Pro186, Pro187, Pro191, Pro195, Pro199, Pro203, Pro207, Pro210, Pro211, Pro215, and Pro219 each carry 4-hydroxyproline. Residues Pro71, Pro75, Pro79, Pro82, Pro83, Pro87, Pro91, Pro95, Pro99, Pro103, Pro107, Pro111, Pro114, Pro115, Pro119, Pro123, Pro127, Pro131, Pro135, Pro139, Pro143, Pro147, Pro151, Pro155, Pro159, Pro163, Pro167, Pro171, Pro175, Pro179, Pro183, Pro186, Pro187, Pro191, Pro195, Pro199, Pro203, Pro207, Pro210, Pro211, Pro215, and Pro219 are each glycosylated (O-linked (Ara...) hydroxyproline). Copy 1 of the repeat occupies 90–109; that stretch reads PPVYPPTKAPVKPPTKPPVK. 3 consecutive repeat copies span residues 122 to 141, 142 to 161, and 162 to 181. 2 N-linked (GlcNAc...) asparagine glycosylation sites follow: Asn226 and Asn269.

This sequence belongs to the non-classical AGP family. Post-translationally, hydroxylated on numerous prolines in the proline-rich region. O-glycosylated on numerous hydroxyprolines in the proline-rich region; noncontiguous hydroxylproline residues are glycosylated with arabinogalactan. In terms of tissue distribution, expressed in vascular bundles of roots, leaves, sepals and stamen filaments, and pistils but not stigma.

Its subcellular location is the secreted. It is found in the cell wall. Proteoglycan that may contribute to the strengthening of cell walls. The protein is Non-classical arabinogalactan protein 31 of Arabidopsis thaliana (Mouse-ear cress).